The following is a 329-amino-acid chain: CDP-diacylglycerol--glycerol-3-phosphate 3-phosphatidyltransferase 1, chloroplastic (329 aa).

Residues 1–38 (MAFLKTLNPLLRRSPTPIPNPRSLLSLDAFLAASSPTA) constitute a chloroplast transit peptide. A run of 4 helical transmembrane segments spans residues 150–170 (PVIG…TLAL), 190–210 (VFGS…VAIA), 217–237 (LHPG…GGAV), and 300–320 (ITVL…GYGI).

It belongs to the CDP-alcohol phosphatidyltransferase class-I family. The cofactor is Mn(2+).

It localises to the plastid. The protein resides in the chloroplast membrane. It catalyses the reaction a CDP-1,2-diacyl-sn-glycerol + sn-glycerol 3-phosphate = a 1,2-diacyl-sn-glycero-3-phospho-(1'-sn-glycero-3'-phosphate) + CMP + H(+). It functions in the pathway phospholipid metabolism; phosphatidylglycerol biosynthesis; phosphatidylglycerol from CDP-diacylglycerol: step 1/2. In terms of biological role, catalyzes the committed step to the synthesis of the acidic phospholipids. Transfers specifically a phosphatidyl group from CDP-diacylglycerol to glycerol-3-phosphate to form phosphatidylglycerophosphate. The sequence is that of CDP-diacylglycerol--glycerol-3-phosphate 3-phosphatidyltransferase 1, chloroplastic from Oryza sativa subsp. japonica (Rice).